The sequence spans 332 residues: Holliday junction branch migration complex subunit RuvB (332 aa).

Positions 1–182 (MNKNFIESNL…FAFTCRLEYY (182 aa)) are large ATPase domain (RuvB-L). ATP-binding positions include Leu21, Arg22, Gly63, Lys66, Thr67, Thr68, 129-131 (EDF), Arg172, Tyr182, and Arg219. Thr67 provides a ligand contact to Mg(2+). The tract at residues 183–253 (DPMILQKILL…VANRALTMLS (71 aa)) is small ATPAse domain (RuvB-S). The head domain (RuvB-H) stretch occupies residues 256–332 (EKGLDEMDKK…YQHIVGSSQR (77 aa)). DNA-binding residues include Arg311 and Arg316.

This sequence belongs to the RuvB family. As to quaternary structure, homohexamer. Forms an RuvA(8)-RuvB(12)-Holliday junction (HJ) complex. HJ DNA is sandwiched between 2 RuvA tetramers; dsDNA enters through RuvA and exits via RuvB. An RuvB hexamer assembles on each DNA strand where it exits the tetramer. Each RuvB hexamer is contacted by two RuvA subunits (via domain III) on 2 adjacent RuvB subunits; this complex drives branch migration. In the full resolvosome a probable DNA-RuvA(4)-RuvB(12)-RuvC(2) complex forms which resolves the HJ.

The protein resides in the cytoplasm. It carries out the reaction ATP + H2O = ADP + phosphate + H(+). In terms of biological role, the RuvA-RuvB-RuvC complex processes Holliday junction (HJ) DNA during genetic recombination and DNA repair, while the RuvA-RuvB complex plays an important role in the rescue of blocked DNA replication forks via replication fork reversal (RFR). RuvA specifically binds to HJ cruciform DNA, conferring on it an open structure. The RuvB hexamer acts as an ATP-dependent pump, pulling dsDNA into and through the RuvAB complex. RuvB forms 2 homohexamers on either side of HJ DNA bound by 1 or 2 RuvA tetramers; 4 subunits per hexamer contact DNA at a time. Coordinated motions by a converter formed by DNA-disengaged RuvB subunits stimulates ATP hydrolysis and nucleotide exchange. Immobilization of the converter enables RuvB to convert the ATP-contained energy into a lever motion, pulling 2 nucleotides of DNA out of the RuvA tetramer per ATP hydrolyzed, thus driving DNA branch migration. The RuvB motors rotate together with the DNA substrate, which together with the progressing nucleotide cycle form the mechanistic basis for DNA recombination by continuous HJ branch migration. Branch migration allows RuvC to scan DNA until it finds its consensus sequence, where it cleaves and resolves cruciform DNA. The protein is Holliday junction branch migration complex subunit RuvB of Protochlamydia amoebophila (strain UWE25).